Here is a 171-residue protein sequence, read N- to C-terminus: Shikimate kinase (171 aa).

14 to 19 (GAGKST) contributes to the ATP binding site. Ser18 provides a ligand contact to Mg(2+). 3 residues coordinate substrate: Asp36, Arg60, and Gly82. Residue Arg120 coordinates ATP. Arg139 contacts substrate. Gln156 lines the ATP pocket.

This sequence belongs to the shikimate kinase family. In terms of assembly, monomer. Mg(2+) is required as a cofactor.

Its subcellular location is the cytoplasm. It catalyses the reaction shikimate + ATP = 3-phosphoshikimate + ADP + H(+). It functions in the pathway metabolic intermediate biosynthesis; chorismate biosynthesis; chorismate from D-erythrose 4-phosphate and phosphoenolpyruvate: step 5/7. Its function is as follows. Catalyzes the specific phosphorylation of the 3-hydroxyl group of shikimic acid using ATP as a cosubstrate. The polypeptide is Shikimate kinase (Shewanella denitrificans (strain OS217 / ATCC BAA-1090 / DSM 15013)).